The following is a 166-amino-acid chain: Phosphopantetheine adenylyltransferase (166 aa).

Position 11 (Ser-11) interacts with substrate. Residues 11 to 12 (SF) and His-19 each bind ATP. Substrate contacts are provided by Lys-43, Val-80, and Arg-94. Residues 95–97 (GLR), Glu-105, and 130–136 (VRTVTAT) each bind ATP.

Belongs to the bacterial CoaD family. In terms of assembly, homohexamer. Mg(2+) is required as a cofactor.

Its subcellular location is the cytoplasm. The catalysed reaction is (R)-4'-phosphopantetheine + ATP + H(+) = 3'-dephospho-CoA + diphosphate. It functions in the pathway cofactor biosynthesis; coenzyme A biosynthesis; CoA from (R)-pantothenate: step 4/5. Its function is as follows. Reversibly transfers an adenylyl group from ATP to 4'-phosphopantetheine, yielding dephospho-CoA (dPCoA) and pyrophosphate. The chain is Phosphopantetheine adenylyltransferase from Chelativorans sp. (strain BNC1).